A 290-amino-acid polypeptide reads, in one-letter code: UPF0750 membrane protein YpjC (290 aa).

A run of 6 helical transmembrane segments spans residues Asn9–Met29, Ala47–Ile67, Thr75–Gln95, Asp106–Phe126, Phe146–Leu166, and Leu179–Ala199.

It belongs to the UPF0750 family.

The protein resides in the cell membrane. The protein is UPF0750 membrane protein YpjC (ypjC) of Bacillus subtilis (strain 168).